The sequence spans 251 residues: Octanoyltransferase (251 aa).

In terms of domain architecture, BPL/LPL catalytic spans 56 to 241; it reads ADTGDEIWVV…NLDGASAAAD (186 aa). Substrate contacts are provided by residues 96-103, 168-170, and 181-183; these read RGGQITYH, ALG, and GLS. Catalysis depends on Cys-199, which acts as the Acyl-thioester intermediate.

Belongs to the LipB family.

The protein localises to the cytoplasm. The enzyme catalyses octanoyl-[ACP] + L-lysyl-[protein] = N(6)-octanoyl-L-lysyl-[protein] + holo-[ACP] + H(+). It participates in protein modification; protein lipoylation via endogenous pathway; protein N(6)-(lipoyl)lysine from octanoyl-[acyl-carrier-protein]: step 1/2. Catalyzes the transfer of endogenously produced octanoic acid from octanoyl-acyl-carrier-protein onto the lipoyl domains of lipoate-dependent enzymes. Lipoyl-ACP can also act as a substrate although octanoyl-ACP is likely to be the physiological substrate. The sequence is that of Octanoyltransferase from Burkholderia cenocepacia (strain HI2424).